A 426-amino-acid chain; its full sequence is Serine hydroxymethyltransferase (426 aa).

Residues L113 and 117-119 (GHL) each bind (6S)-5,6,7,8-tetrahydrofolate. The residue at position 222 (K222) is an N6-(pyridoxal phosphate)lysine. 363 to 365 (SPF) lines the (6S)-5,6,7,8-tetrahydrofolate pocket.

This sequence belongs to the SHMT family. Homodimer. Requires pyridoxal 5'-phosphate as cofactor.

Its subcellular location is the cytoplasm. It catalyses the reaction (6R)-5,10-methylene-5,6,7,8-tetrahydrofolate + glycine + H2O = (6S)-5,6,7,8-tetrahydrofolate + L-serine. It participates in one-carbon metabolism; tetrahydrofolate interconversion. Its pathway is amino-acid biosynthesis; glycine biosynthesis; glycine from L-serine: step 1/1. Functionally, catalyzes the reversible interconversion of serine and glycine with tetrahydrofolate (THF) serving as the one-carbon carrier. This reaction serves as the major source of one-carbon groups required for the biosynthesis of purines, thymidylate, methionine, and other important biomolecules. Also exhibits THF-independent aldolase activity toward beta-hydroxyamino acids, producing glycine and aldehydes, via a retro-aldol mechanism. This is Serine hydroxymethyltransferase from Azobacteroides pseudotrichonymphae genomovar. CFP2.